Here is a 296-residue protein sequence, read N- to C-terminus: Lipoyl synthase (296 aa).

7 residues coordinate [4Fe-4S] cluster: Cys37, Cys42, Cys48, Cys63, Cys67, Cys70, and Ser276. One can recognise a Radical SAM core domain in the interval 49–265 (WSKKHTTVMI…ERVAKTKGFL (217 aa)).

It belongs to the radical SAM superfamily. Lipoyl synthase family. [4Fe-4S] cluster is required as a cofactor.

It localises to the cytoplasm. It catalyses the reaction [[Fe-S] cluster scaffold protein carrying a second [4Fe-4S](2+) cluster] + N(6)-octanoyl-L-lysyl-[protein] + 2 oxidized [2Fe-2S]-[ferredoxin] + 2 S-adenosyl-L-methionine + 4 H(+) = [[Fe-S] cluster scaffold protein] + N(6)-[(R)-dihydrolipoyl]-L-lysyl-[protein] + 4 Fe(3+) + 2 hydrogen sulfide + 2 5'-deoxyadenosine + 2 L-methionine + 2 reduced [2Fe-2S]-[ferredoxin]. It participates in protein modification; protein lipoylation via endogenous pathway; protein N(6)-(lipoyl)lysine from octanoyl-[acyl-carrier-protein]: step 2/2. Catalyzes the radical-mediated insertion of two sulfur atoms into the C-6 and C-8 positions of the octanoyl moiety bound to the lipoyl domains of lipoate-dependent enzymes, thereby converting the octanoylated domains into lipoylated derivatives. This chain is Lipoyl synthase, found in Rickettsia conorii (strain ATCC VR-613 / Malish 7).